We begin with the raw amino-acid sequence, 398 residues long: NADH-quinone oxidoreductase subunit D (398 aa).

Belongs to the complex I 49 kDa subunit family. As to quaternary structure, NDH-1 is composed of 14 different subunits. Subunits NuoB, C, D, E, F, and G constitute the peripheral sector of the complex.

It localises to the cell inner membrane. It carries out the reaction a quinone + NADH + 5 H(+)(in) = a quinol + NAD(+) + 4 H(+)(out). Functionally, NDH-1 shuttles electrons from NADH, via FMN and iron-sulfur (Fe-S) centers, to quinones in the respiratory chain. The immediate electron acceptor for the enzyme in this species is believed to be ubiquinone. Couples the redox reaction to proton translocation (for every two electrons transferred, four hydrogen ions are translocated across the cytoplasmic membrane), and thus conserves the redox energy in a proton gradient. The sequence is that of NADH-quinone oxidoreductase subunit D from Bradyrhizobium diazoefficiens (strain JCM 10833 / BCRC 13528 / IAM 13628 / NBRC 14792 / USDA 110).